Here is a 277-residue protein sequence, read N- to C-terminus: NH(3)-dependent NAD(+) synthetase (277 aa).

Position 46–53 (46–53) interacts with ATP; that stretch reads GISGGQDS. Mg(2+) is bound at residue Asp52. Arg142 provides a ligand contact to deamido-NAD(+). Residue Thr162 coordinates ATP. Glu167 provides a ligand contact to Mg(2+). Deamido-NAD(+) is bound by residues Lys175 and Asp182. Lys191 and Thr213 together coordinate ATP. Deamido-NAD(+) is bound at residue 263-264; the sequence is HK.

It belongs to the NAD synthetase family. In terms of assembly, homodimer.

The catalysed reaction is deamido-NAD(+) + NH4(+) + ATP = AMP + diphosphate + NAD(+) + H(+). It functions in the pathway cofactor biosynthesis; NAD(+) biosynthesis; NAD(+) from deamido-NAD(+) (ammonia route): step 1/1. Catalyzes the ATP-dependent amidation of deamido-NAD to form NAD. Uses ammonia as a nitrogen source. The polypeptide is NH(3)-dependent NAD(+) synthetase (Corynebacterium glutamicum (strain ATCC 13032 / DSM 20300 / JCM 1318 / BCRC 11384 / CCUG 27702 / LMG 3730 / NBRC 12168 / NCIMB 10025 / NRRL B-2784 / 534)).